The primary structure comprises 299 residues: Homoserine kinase (299 aa).

Residue 88–98 participates in ATP binding; sequence PLGRGLGSSAT.

Belongs to the GHMP kinase family. Homoserine kinase subfamily.

The protein localises to the cytoplasm. The catalysed reaction is L-homoserine + ATP = O-phospho-L-homoserine + ADP + H(+). It functions in the pathway amino-acid biosynthesis; L-threonine biosynthesis; L-threonine from L-aspartate: step 4/5. In terms of biological role, catalyzes the ATP-dependent phosphorylation of L-homoserine to L-homoserine phosphate. The polypeptide is Homoserine kinase (Gloeobacter violaceus (strain ATCC 29082 / PCC 7421)).